Consider the following 335-residue polypeptide: MKKIAIDAMGGDHAPKAIVEGVNQAIEAFSDIEIQLYGDQSRIESYLVKSDRVSIVHTDEKINSDDEPAKAIRRKKNASMVLAARAVKDGRADAVLSAGNTGALLAAGLFIIGRIKGVDRPGLLSTLPTVDGSGFDMLDLGANAENTAEHLHQYAILGSFYAKHVRGIAKPRIGLLNNGTEATKGDSLRKEVYKLLASDSSLQFIGNVEARDLMSGVADVVVADGFTGNAVLKSIEGTAMSIMGQLKSAIAVGGVKAKLGALLLKGSLYDLKDTLDYSSAGGAVLFGLKAPLVKSHGSSDAKAIFHTIKQVRTMLETDVVGQLVEEFSKESDAND.

The protein belongs to the PlsX family. As to quaternary structure, homodimer. Probably interacts with PlsY.

It is found in the cytoplasm. It catalyses the reaction a fatty acyl-[ACP] + phosphate = an acyl phosphate + holo-[ACP]. The protein operates within lipid metabolism; phospholipid metabolism. Functionally, catalyzes the reversible formation of acyl-phosphate (acyl-PO(4)) from acyl-[acyl-carrier-protein] (acyl-ACP). This enzyme utilizes acyl-ACP as fatty acyl donor, but not acyl-CoA. The polypeptide is Phosphate acyltransferase (Streptococcus equi subsp. zooepidemicus (strain H70)).